The following is a 417-amino-acid chain: Serine hydroxymethyltransferase (417 aa).

(6S)-5,6,7,8-tetrahydrofolate is bound by residues L112 and 116–118; that span reads GHL. An N6-(pyridoxal phosphate)lysine modification is found at K221. Position 247 (E247) interacts with (6S)-5,6,7,8-tetrahydrofolate.

It belongs to the SHMT family. In terms of assembly, homodimer. Pyridoxal 5'-phosphate is required as a cofactor.

Its subcellular location is the cytoplasm. The catalysed reaction is (6R)-5,10-methylene-5,6,7,8-tetrahydrofolate + glycine + H2O = (6S)-5,6,7,8-tetrahydrofolate + L-serine. It participates in one-carbon metabolism; tetrahydrofolate interconversion. It functions in the pathway amino-acid biosynthesis; glycine biosynthesis; glycine from L-serine: step 1/1. Catalyzes the reversible interconversion of serine and glycine with tetrahydrofolate (THF) serving as the one-carbon carrier. This reaction serves as the major source of one-carbon groups required for the biosynthesis of purines, thymidylate, methionine, and other important biomolecules. Also exhibits THF-independent aldolase activity toward beta-hydroxyamino acids, producing glycine and aldehydes, via a retro-aldol mechanism. In Borreliella afzelii (strain PKo) (Borrelia afzelii), this protein is Serine hydroxymethyltransferase.